The sequence spans 339 residues: NmrA-like family domain-containing oxidoreductase cpsB (339 aa).

Lys-142 lines the NADP(+) pocket.

This sequence belongs to the NmrA-type oxidoreductase family.

It catalyses the reaction didehydrocampesine A + 2 AH2 = campesine A + 2 A. Its pathway is alkaloid biosynthesis. In terms of biological role, oxidoreductase; part of the gene cluster that mediates the biosynthesis of campesine G, a dimeric indole piperazine alkaloid that shows good insecticidal activity Galleria mellonella. Within the pathway, cpsB reduces the unstable (S,S)-trypyl-valyl dihydropiperazine (didehydrocampesine A) intermediate to (S, S)-trypyl-valyl-piperazine (campesine A) using two equivalents of NAD(P)H. The non-canonical non-ribosomal peptide synthetase cpsA catalyzes the first steps of the pathway by producing L-tryptophanal and L-valinal from their respective amino-acids. These products condensate spontaneously to form trypyl-valyl pyrazine also known as didehydrocampesine A. The NmrA-like family domain-containing oxidoreductase cpsB is the next enzyme in cps pathway and reduces the unstable didehydrocampesine A to campesine A. The methyltransferase cpsF and the acetyltransferase cpsE both recognize N13 of piperazine ring to carry out methylation and acetylation of campesine A to produce campesine C and B, respectively. The cytochrome P450 monooxygenase cpsD then acts as a dimerase that catalyzes oxidative heterocoupling between campesine B and C to produce heterodimers with unexpected 6/5/6/6/6/6/5/6 eight-ring scaffold called campesine D. Finally,the cytochrome P450 monooxygenase cpsC is a regioselective dehydrogenase that catalyzes dehydrogenation reaction towards C2-N1 to produce campesine G. In Aspergillus campestris (strain IBT 28561), this protein is NmrA-like family domain-containing oxidoreductase cpsB.